The sequence spans 422 residues: Adenylosuccinate synthetase (422 aa).

GTP-binding positions include 11-17 and 39-41; these read GDEGKGK and GHT. The Proton acceptor role is filled by Asp12. Mg(2+)-binding residues include Asp12 and Gly39. Residues 12 to 15, 37 to 40, Thr129, Arg143, Asn220, Thr235, and Arg299 contribute to the IMP site; these read DEGK and NAGH. His40 acts as the Proton donor in catalysis. Residue 295–301 participates in substrate binding; that stretch reads VTTGRKR. Residues Arg301, 327–329, and 410–412 contribute to the GTP site; these read KLD and GTG.

This sequence belongs to the adenylosuccinate synthetase family. In terms of assembly, homodimer. Requires Mg(2+) as cofactor.

The protein localises to the cytoplasm. It carries out the reaction IMP + L-aspartate + GTP = N(6)-(1,2-dicarboxyethyl)-AMP + GDP + phosphate + 2 H(+). It functions in the pathway purine metabolism; AMP biosynthesis via de novo pathway; AMP from IMP: step 1/2. Its function is as follows. Plays an important role in the de novo pathway and in the salvage pathway of purine nucleotide biosynthesis. Catalyzes the first committed step in the biosynthesis of AMP from IMP. The chain is Adenylosuccinate synthetase from Arthroderma otae (strain ATCC MYA-4605 / CBS 113480) (Microsporum canis).